Here is an 801-residue protein sequence, read N- to C-terminus: MDTMLKSNPQTQQRSNHNGQETSLWSSSFGMKMEAITPFLGKYRPFMGRCCQTCTPKSWESLFHRSIMDLGFCNVILVKEENTRFRGWLVRRLCYFLWSLEQHIPTSFDASQKIMENTGVQNLLSGRVPGAAGEGQAPELVKKEVQRILGHIQTTPRPFLLRLFSWALLWFLNRLFLNVQLHKGQMKMVQKAVQEGSPLVFLSTHKSLLDGFLLPFVLFSQGLGVVRVALDSRTCSPALRALLRKLGGLFLPPEVNLSLDNSEGILARAVVRATVEELLTSGQPLLIFLEEPPGSPGPRLSALGQAWLGVVIQAVQAGIISDATLVPVAIAYDLVPDAPCNMNHDLAPLGLWTGALAVFRRLCNCWGCNRRVCVRVHLAQPFSLQEYTINARSCWDSRQTLEHLLQPIVLGECSVVPDTEKEQEWTPPTGLLLALKEEDQLLVRRLSRHVLSASVASSAVMSTAIMATLLLLKHQKGVVLSQLLGEFSWLTEETLLRGFDVGFSGQLRCLAQHTLSLLRAHVVLLRVHQGDLVVVPRPGPGLTHLARLSMELLPTFLSEAVGACAVRGLLAGRVPPEGPWELQGIELLSQNELYRQILLLLHLLPQDLLLPQPCQSSYCYCQEVLDRLIQCGLLVAEETPGSRPACDTGRQHLSAKLLWKPSGDFTDSESDDFEEPGGRCFRLSQQSRCPDFFLFLCRLLSPILKAFAQAATFLHLGQLPDSEVAYSEKLFQFLQACAQEEGIFECADPNLAISAVWTFKDLGVLQEMPSPTGPQLHLSPTFATRDNQDKLEQFIRQFICS.

A disordered region spans residues 1–24 (MDTMLKSNPQTQQRSNHNGQETSL). Over 1–305 (MDTMLKSNPQ…PGPRLSALGQ (305 aa)) the chain is Cytoplasmic. Residues 180-290 (QLHKGQMKMV…SGQPLLIFLE (111 aa)) form an acyltransferase region. Positions 205–210 (HKSLLD) match the HXXXXD motif motif. A helical membrane pass occupies residues 306 to 332 (AWLGVVIQAVQAGIISDATLVPVAIAY). Residues 333 to 449 (DLVPDAPCNM…QLLVRRLSRH (117 aa)) are Mitochondrial intermembrane-facing. The chain crosses the membrane as a helical span at residues 450 to 472 (VLSASVASSAVMSTAIMATLLLL). At 473–801 (KHQKGVVLSQ…EQFIRQFICS (329 aa)) the chain is on the cytoplasmic side. Serine 662 bears the Phosphoserine mark. At threonine 666 the chain carries Phosphothreonine. 2 positions are modified to phosphoserine: serine 668 and serine 670.

Belongs to the GPAT/DAPAT family. Interacts with PIWIL2. As to expression, highly expressed in the testis. Expressed at lower levels in the heart, liver, kidney, spleen and adipose cells. Only detected in primary spermatocytes.

It localises to the mitochondrion outer membrane. It carries out the reaction sn-glycerol 3-phosphate + an acyl-CoA = a 1-acyl-sn-glycero-3-phosphate + CoA. It catalyses the reaction a 1-acyl-sn-glycero-3-phosphate + an acyl-CoA = a 1,2-diacyl-sn-glycero-3-phosphate + CoA. The enzyme catalyses 1-(9Z-octadecenoyl)-sn-glycero-3-phosphate + (9Z)-octadecenoyl-CoA = 1,2-di-(9Z-octadecenoyl)-sn-glycero-3-phosphate + CoA. The catalysed reaction is 1-(9Z-octadecenoyl)-sn-glycero-3-phosphate + (5Z,8Z,11Z,14Z)-eicosatetraenoyl-CoA = 1-(9Z)-octadecenoyl-2-(5Z,8Z,11Z,14Z)-eicosatetraenoyl-sn-glycero-3-phosphate + CoA. It carries out the reaction (5Z,8Z,11Z,14Z)-eicosatetraenoyl-CoA + sn-glycerol 3-phosphate = 1-(5Z,8Z,11Z,14Z-eicosatetraenoyl)-sn-glycero-3-phosphate + CoA. Its pathway is phospholipid metabolism; CDP-diacylglycerol biosynthesis; CDP-diacylglycerol from sn-glycerol 3-phosphate: step 1/3. Inhibited by N-ethylmaleimide (NEM). Transfers an acyl-group from acyl-ACP to the sn-1 position of glycerol-3-phosphate producing a lysophosphatidic acid (LPA), an essential step for the triacylglycerol (TAG) and glycerophospholipids. In vitro also transfers an acyl-group from acyl-ACP to the LPA producing a phosphatidic acid (PA). Prefers arachidonoyl-CoA as the acyl donor. Required for primary processing step during piRNA biosynthesis. Molecular mechanisms by which it promotes piRNA biosynthesis are unclear and do not involve its acyltransferase activity. The chain is Glycerol-3-phosphate acyltransferase 2, mitochondrial from Mus musculus (Mouse).